Consider the following 570-residue polypeptide: Guanine nucleotide-binding protein alpha-3 subunit (570 aa).

One can recognise a PH domain in the interval 10–113 (RETLRAYLSK…WIEAIKHAIE (104 aa)). A G-alpha domain is found at 144 to 570 (PVLKLLLLGT…IISKTLEFYC (427 aa)). Residues 147-160 (KLLLLGTGESGKST) form a G1 motif region. GTP is bound at residue 152-159 (GTGESGKS). Ser-159 contributes to the Mg(2+) binding site. Composition is skewed to low complexity over residues 254-272 (NNNS…SSSS) and 290-316 (NSNS…RSNS). A disordered region spans residues 254-321 (NNNSNSSSLK…NRSNSDGSSN (68 aa)). The interval 386–394 (DILKSRATT) is G2 motif. GTP-binding positions include 388 to 394 (LKSRATT), 414 to 418 (DVAGQ), 483 to 486 (NKID), and Ala-544. Thr-394 provides a ligand contact to Mg(2+). Positions 410–419 (FRIVDVAGQR) are G3 motif. A G4 motif region spans residues 479–486 (ILFLNKID). Residues 542 to 547 (TCATDT) are G5 motif.

The protein belongs to the G-alpha family. In terms of assembly, g proteins are composed of 3 units; alpha, beta and gamma. The alpha chain contains the guanine nucleotide binding site.

In terms of biological role, guanine nucleotide-binding proteins (G proteins) are involved as modulators or transducers in various transmembrane signaling systems. G alpha-3 plays a role in development. G alpha-3 mutants fail to aggregate. This chain is Guanine nucleotide-binding protein alpha-3 subunit (gpaC), found in Dictyostelium discoideum (Social amoeba).